Here is a 377-residue protein sequence, read N- to C-terminus: Tryptophan--tRNA ligase, mitochondrial (377 aa).

ATP-binding positions include glutamine 21 and 28-31 (HLGN). Residues 22–31 (PTSSALHLGN) carry the 'HIGH' region motif. Aspartate 181 lines the L-tryptophan pocket. ATP-binding positions include 193–195 (GED), 242–246 (KMSKS), and lysine 245. The 'KMSKS' region motif lies at 242-246 (KMSKS).

This sequence belongs to the class-I aminoacyl-tRNA synthetase family.

Its subcellular location is the mitochondrion matrix. It carries out the reaction tRNA(Trp) + L-tryptophan + ATP = L-tryptophyl-tRNA(Trp) + AMP + diphosphate + H(+). In Dictyostelium discoideum (Social amoeba), this protein is Tryptophan--tRNA ligase, mitochondrial (wars2).